Here is a 500-residue protein sequence, read N- to C-terminus: Organic cation/carnitine transporter 7 (500 aa).

Residues 1–23 (MADGNTRFTVDEALVAMGFGKFQ) lie on the Cytoplasmic side of the membrane. A helical transmembrane segment spans residues 24–44 (IYVLAYAGMGWVAEAMEMMLL). The Extracellular segment spans residues 45 to 62 (SFVGPAVQSLWNLSARQE). Asn56 carries an N-linked (GlcNAc...) asparagine glycan. A helical membrane pass occupies residues 63–83 (SLITSVVFAGMLIGAYSWGIV). Residues 84–97 (SDKHGRRKGFIITA) are Cytoplasmic-facing. The helical transmembrane segment at 98–118 (VVTFVAGFLSAFSPNYMWLII) threads the bilayer. At 119-120 (LR) the chain is on the extracellular side. A helical membrane pass occupies residues 121 to 141 (CLVGLGLGGGPVLASWYLEFI). 137-144 (YLEFIPAP) contributes to the ATP binding site. Topologically, residues 142–150 (PAPSRGTWM) are cytoplasmic. A helical transmembrane segment spans residues 151 to 171 (VVFSAFWTVGTIFEASLAWLV). The Extracellular segment spans residues 172–174 (MPR). A helical transmembrane segment spans residues 175–195 (LGWRWLLAFSSVPSSLLLLFY). Topologically, residues 196–293 (RWTSESPRYL…ALLSPTLMKR (98 aa)) are cytoplasmic. Residues 294 to 314 (TLLLWVVFFGNAFAYYGVVLL) form a helical membrane-spanning segment. Topologically, residues 315–341 (TTELNNSHNRCYPTEKQLRNSNDVNYR) are extracellular. Residue Asn319 is glycosylated (N-linked (GlcNAc...) asparagine). Residues 342–362 (DVFIASFAEFPGLLISAAMVD) traverse the membrane as a helical segment. The Cytoplasmic portion of the chain corresponds to 363–367 (RLGRK). The helical transmembrane segment at 368–387 (ASMASMLFTCCIFLLPLLSH) threads the bilayer. Residues 388–401 (QSPFITTVLLFGGR) are Extracellular-facing. The chain crosses the membrane as a helical span at residues 402–422 (ICISAAFTVVYIYAPEIYPTA). The Cytoplasmic portion of the chain corresponds to 423-429 (VRTTGVG). A helical transmembrane segment spans residues 430-450 (VGSSVGRIGGILCPLVAVGLV). Residues 451 to 456 (HGCHQT) lie on the Extracellular side of the membrane. Residues 457–477 (IAVLLFEVVILVSGICVCLFP) form a helical membrane-spanning segment. At 478–500 (FETSGRDLTDSISASKEPPSASV) the chain is on the cytoplasmic side.

It belongs to the major facilitator (TC 2.A.1) superfamily. Organic cation transporter (TC 2.A.1.19) family. Expressed in pollen.

The protein localises to the membrane. Functionally, high affinity carnitine transporter involved in the active cellular uptake of carnitine. Also transports organic cations. The polypeptide is Organic cation/carnitine transporter 7 (OCT7) (Arabidopsis thaliana (Mouse-ear cress)).